The primary structure comprises 908 residues: Glutamate receptor ionotropic, kainate 2 (908 aa).

A signal peptide spans 1–31 (MKIIFPILSNPVFRRTVKLLLCLLWIGYSQG). Over 32-561 (TTHVLRFGGI…VFSFLNPLSP (530 aa)) the chain is Extracellular. Residues N67, N73, N275, N378, N412, N423, and N430 are each glycosylated (N-linked (GlcNAc...) asparagine). The cysteines at positions 96 and 347 are disulfide-linked. 3 residues coordinate L-glutamate: P516, A518, and R523. N546 carries N-linked (GlcNAc...) asparagine glycosylation. A helical membrane pass occupies residues 562–582 (DIWMYVLLACLGVSCVLFVIA). Residues 583–638 (RFSPYEWYNPHPCNPDSDVVENNFTLLNSFWFGVGALMRQGSELMPKALSTRIVGG) lie on the Cytoplasmic side of the membrane. A helical membrane pass occupies residues 639–659 (IWWFFTLIIISSYTANLAAFL). Residues 660–819 (TVERMESPID…KEASALGVQN (160 aa)) lie on the Extracellular side of the membrane. L-glutamate contacts are provided by A689, T690, and E738. The cysteines at positions 750 and 804 are disulfide-linked. N751 carries N-linked (GlcNAc...) asparagine glycosylation. A helical membrane pass occupies residues 820–840 (IGGIFIVLAAGLVLSVFVAVG). Topologically, residues 841-908 (EFLYKSKKNA…RRLPGKETMA (68 aa)) are cytoplasmic. A phosphoserine; by PKC mark is found at S846 and S868. Residue K886 forms a Glycyl lysine isopeptide (Lys-Gly) (interchain with G-Cter in SUMO1) linkage.

The protein belongs to the glutamate-gated ion channel (TC 1.A.10.1) family. GRIK2 subfamily. As to quaternary structure, homotetramer and heterotetramer with GRIK5. Tetramers may be formed by the dimerization of dimers. Assembles into a kainate-gated homomeric channel that does not bind AMPA. Can form functional heteromeric receptors with GRIK3, GRIK4 and GRIK5. Interacts with NETO2. Interacts with DLG4. Interacts with NETO2. Interacts (via C-terminus) with KLHL17 (via kelch repeats); the interaction targets GRIK2 for degradation via ubiquitin-proteasome pathway. Post-translationally, sumoylation mediates kainate receptor-mediated endocytosis and regulates synaptic transmission. Sumoylation is enhanced by PIAS3 and desumoylated by SENP1. Ubiquitinated. Ubiquitination regulates the GRIK2 levels at the synapse by leading kainate receptor degradation through proteasome. In terms of processing, phosphorylated by PKC at Ser-868 upon agonist activation, this directly enhance sumoylation.

It localises to the cell membrane. Its subcellular location is the postsynaptic cell membrane. It catalyses the reaction Ca(2+)(in) = Ca(2+)(out). The catalysed reaction is Na(+)(in) = Na(+)(out). With respect to regulation, cold receptor activity activated by temperatures between 10-19 degrees Celsius. Ionotropic glutamate receptor that functions as a cation-permeable ligand-gated ion channel, gated by L-glutamate and the glutamatergic agonist kainic acid. L-glutamate acts as an excitatory neurotransmitter at many synapses in the central nervous system. Binding of the excitatory neurotransmitter L-glutamate induces a conformation change, leading to the opening of the cation channel, and thereby converts the chemical signal to an electrical impulse. The receptor then desensitizes rapidly and enters a transient inactive state, characterized by the presence of bound agonist. Modulates cell surface expression of NETO2. In association with GRIK3, involved in presynaptic facilitation of glutamate release at hippocampal mossy fiber synapses. Its function is as follows. Independent of its ionotropic glutamate receptor activity, acts as a thermoreceptor conferring sensitivity to cold temperatures. Functions in dorsal root ganglion neurons. This chain is Glutamate receptor ionotropic, kainate 2 (GRIK2), found in Macaca fascicularis (Crab-eating macaque).